A 168-amino-acid chain; its full sequence is Protein-export protein SecB (168 aa).

It belongs to the SecB family. Homotetramer, a dimer of dimers. One homotetramer interacts with 1 SecA dimer.

It localises to the cytoplasm. Functionally, one of the proteins required for the normal export of preproteins out of the cell cytoplasm. It is a molecular chaperone that binds to a subset of precursor proteins, maintaining them in a translocation-competent state. It also specifically binds to its receptor SecA. This chain is Protein-export protein SecB, found in Thioalkalivibrio sulfidiphilus (strain HL-EbGR7).